A 1063-amino-acid chain; its full sequence is MQSTDLGSKESGKIWHRKPSPATRDGIIVNIIHNTSDYLPKVLRFLNVAFDSSGDCLIAGDHHGNIYVFDLCGNRFNLVQRTAQACTALAFNLHRKSEFLVALADYSIKCFDTVTKELVSWMRGHESSVFSISVHGSGRYAITTSSDTAQLWDLDTFQRKRKLNILQSVGIQKVFFLPLSNTILSCFKDNSIFAWECDTLVCKYQLPAPPESSNILYKVFAVTRDGRILAAGGKSNHIHLWCLEAKQLFRIIQMPTKVRAIRHLEFLPDSFDAGSNQVLGVLSQDGIMRFINIQTCKLLFEIGSLDDGISSSVISPHGRYIASIMENGSLNIYSVQTLTKEINKPPPPLVKVIEDLPKKKGNSGDLKVKVTSGRVRRPARSRESKIQTRILKQDLTCGFEKKENELSDGLNKKRLQILLKGYGEFPTKYRMFIWRSLLQLPENQTAFSNLIDKGIHVAFLNLQKKYPIKSRKLLRVLQRTLSALAHWSAIFSDTPYLPLLAFPFVKLFQNNQLICFEVVATLIINWCQHWFEYFPNPPINILSMIENVLAFHDKELLQHFINHDVTSQLYAWPLLETVFSEVLTREEWLKLFDNVFSNHPSFLLMTVVAYNICSRAPLLNCKRKDDFEYFFHHRNNLDISAVIREAYRLLDTTPADIHPDSMLDAFVALTKGQYPVFNQYPKFIVDYQTQERERIRNDELDYLRERQAVEEMQAEVDQQRVEDEAWYQKQELLRRAEETRREILLQEEEKMIQQRQRLAAVRRELKVKEMHLQDAARRRLLQLQQDQREMELRRLDDEIERKVHMRDREIAATAKDLEMRHLELESQKRLYEKNLSRNQEAVAKEMKENADAYRQKVDVEEHMFHRLIGTDQTQNQKIHKLIEENLAKAEQACLNTDWRIQALHKQRCSDLHRNECYQEIAKLLRKNRKKEIEVLNAMMEGEAKKWEEAEEKDFHLKSEKKTAALSDASRRWFLEKEIHDAQHPCDKVVPKGRDEEFASGCLPRASQLNDISEMESLTQISLNQRKMHWDAMEQDLMERVRNLRQRLVTQAQNRCQTPHLLAT.

WD repeat units lie at residues 33–74, 75–116, 117–157, 158–200, 201–248, 249–296, and 297–334; these read HNTS…LCGN, RFNL…TVTK, ELVS…LDTF, QRKR…CDTL, VCKY…AKQL, FRII…IQTC, and KLLF…NIYS. One can recognise a Rab-GAP TBC domain in the interval 424 to 599; the sequence is EFPTKYRMFI…KLFDNVFSNH (176 aa). A coiled-coil region spans residues 699 to 951; the sequence is ELDYLRERQA…EAKKWEEAEE (253 aa). Positions 1050 to 1053 are mediates direct interaction with PJA2; the sequence is QAQN.

Interacts with PJA2; the interaction is direct and recruits PJA2 to centrosomes. Interacts with OFD1; regulates its activity in cilium assembly. Interacts with PRKACA.

It localises to the cytoplasm. The protein resides in the cytoskeleton. The protein localises to the microtubule organizing center. It is found in the centrosome. Its subcellular location is the centriolar satellite. It localises to the cilium basal body. In terms of biological role, molecular adapter which is involved in cilium biogenesis. Part of a functional complex including OFD1 a centriolar protein involved in cilium assembly. Could regulate the cAMP-dependent phosphorylation of OFD1, and its subsequent ubiquitination by PJA2 which ultimately leads to its proteasomal degradation. In Bos taurus (Bovine), this protein is TBC1 domain family member 31.